The following is a 645-amino-acid chain: Macrolide export ATP-binding/permease protein MacB (645 aa).

Positions 6 to 244 (IELKDVTRYY…EAPQYRYARK (239 aa)) constitute an ABC transporter domain. 42 to 49 (GQSGSGKS) is a binding site for ATP. Helical transmembrane passes span 271 to 291 (ALTL…LAIG), 520 to 540 (FSIL…IGVM), 577 to 597 (VVGG…VFII), and 608 to 628 (PLPA…FGLL).

It belongs to the ABC transporter superfamily. Macrolide exporter (TC 3.A.1.122) family. In terms of assembly, homodimer.

The protein localises to the cell inner membrane. Its function is as follows. Non-canonical ABC transporter that contains transmembrane domains (TMD), which form a pore in the inner membrane, and an ATP-binding domain (NBD), which is responsible for energy generation. Confers resistance against macrolides. The sequence is that of Macrolide export ATP-binding/permease protein MacB from Hyphomonas neptunium (strain ATCC 15444).